Here is a 398-residue protein sequence, read N- to C-terminus: Tryptophan synthase beta chain (398 aa).

The residue at position 92 (K92) is an N6-(pyridoxal phosphate)lysine.

Belongs to the TrpB family. As to quaternary structure, tetramer of two alpha and two beta chains. It depends on pyridoxal 5'-phosphate as a cofactor.

It catalyses the reaction (1S,2R)-1-C-(indol-3-yl)glycerol 3-phosphate + L-serine = D-glyceraldehyde 3-phosphate + L-tryptophan + H2O. It participates in amino-acid biosynthesis; L-tryptophan biosynthesis; L-tryptophan from chorismate: step 5/5. Its function is as follows. The beta subunit is responsible for the synthesis of L-tryptophan from indole and L-serine. The chain is Tryptophan synthase beta chain from Nitrosospira multiformis (strain ATCC 25196 / NCIMB 11849 / C 71).